Here is a 191-residue protein sequence, read N- to C-terminus: Glycerol-3-phosphate acyltransferase (191 aa).

The next 6 membrane-spanning stretches (helical) occupy residues 7–27 (ILVL…SYIG), 51–71 (KLAV…VMLA), 80–100 (FVFM…WLSF), 115–135 (FIEY…FVIF), 139–159 (SLSS…HYSA), and 161–181 (ESIT…ENIV).

The protein belongs to the PlsY family. As to quaternary structure, probably interacts with PlsX.

The protein resides in the cell inner membrane. The catalysed reaction is an acyl phosphate + sn-glycerol 3-phosphate = a 1-acyl-sn-glycero-3-phosphate + phosphate. It functions in the pathway lipid metabolism; phospholipid metabolism. In terms of biological role, catalyzes the transfer of an acyl group from acyl-phosphate (acyl-PO(4)) to glycerol-3-phosphate (G3P) to form lysophosphatidic acid (LPA). This enzyme utilizes acyl-phosphate as fatty acyl donor, but not acyl-CoA or acyl-ACP. This is Glycerol-3-phosphate acyltransferase from Ehrlichia canis (strain Jake).